The sequence spans 365 residues: Protein RecA (365 aa).

Residue Gly81 to Thr88 participates in ATP binding.

This sequence belongs to the RecA family.

The protein localises to the cytoplasm. Its function is as follows. Can catalyze the hydrolysis of ATP in the presence of single-stranded DNA, the ATP-dependent uptake of single-stranded DNA by duplex DNA, and the ATP-dependent hybridization of homologous single-stranded DNAs. It interacts with LexA causing its activation and leading to its autocatalytic cleavage. This is Protein RecA from Borreliella burgdorferi (strain ATCC 35210 / DSM 4680 / CIP 102532 / B31) (Borrelia burgdorferi).